A 131-amino-acid polypeptide reads, in one-letter code: uncharacterized protein (131 aa).

This is an uncharacterized protein from Staphylococcus aureus.